Here is a 186-residue protein sequence, read N- to C-terminus: Ribosome-recycling factor (186 aa).

It belongs to the RRF family.

Its subcellular location is the cytoplasm. Its function is as follows. Responsible for the release of ribosomes from messenger RNA at the termination of protein biosynthesis. May increase the efficiency of translation by recycling ribosomes from one round of translation to another. In Rhodopseudomonas palustris (strain ATCC BAA-98 / CGA009), this protein is Ribosome-recycling factor.